The sequence spans 1940 residues: Myosin-1B (1940 aa).

One can recognise a Myosin N-terminal SH3-like domain in the interval 33–82; the sequence is DAKSSVFVVHAKESYVKSTIQSKESGKVTVKTEGGETLTVKEDQIFSMNP. One can recognise a Myosin motor domain in the interval 86–783; sequence DKIEDMAMMT…LLGLLEEMRD (698 aa). K130 is subject to N6,N6,N6-trimethyllysine. 179 to 186 lines the ATP pocket; that stretch reads GESGAGKT. Actin-binding regions lie at residues 660 to 682 and 762 to 776; these read LNKLMSNLRSTHPHFVRCLIPNE and KFGHTKVFFKAGLLG. An IQ domain is found at 786–815; that stretch reads LAQLITRTQARCRGFLMRVEFKKMMERRES. Residues 844–1940 adopt a coiled-coil conformation; it reads LLKSAESEKE…EIGKKAESEE (1097 aa). Residues 1912-1940 form a disordered region; sequence EERADIAESQVNKLRAKSREIGKKAESEE. Residues 1928–1940 show a composition bias toward basic and acidic residues; that stretch reads KSREIGKKAESEE.

Belongs to the TRAFAC class myosin-kinesin ATPase superfamily. Myosin family. In terms of assembly, muscle myosin is a hexameric protein that consists of 2 heavy chain subunits (MHC), 2 alkali light chain subunits (MLC) and 2 regulatory light chain subunits (MLC-2).

It is found in the cytoplasm. The protein resides in the myofibril. Muscle contraction. The sequence is that of Myosin-1B (MYH1B) from Gallus gallus (Chicken).